Here is a 968-residue protein sequence, read N- to C-terminus: Putative pectinesterase/pectinesterase inhibitor 26 (968 aa).

Residues 33–53 (IGISVAVLVAIIISSTVTIAI) form a helical membrane-spanning segment. The tract at residues 71–230 (LTPAASLKTV…TEFTSNSLAI (160 aa)) is pectinesterase inhibitor 26 A. Residues Asn-101, Asn-158, Asn-219, Asn-295, Asn-352, Asn-400, Asn-464, Asn-541, Asn-559, and Asn-603 are each glycosylated (N-linked (GlcNAc...) asparagine). The pectinesterase inhibitor 26 B stretch occupies residues 265 to 430 (LTPAASLRNV…RKFTSNSLAI (166 aa)). The interval 453–614 (PTPSSVLRTV…TEFTSNSLAI (162 aa)) is pectinesterase inhibitor 26 C. Residues 660-954 (HVTVAADGSG…FTVKYFLRGD (295 aa)) are pectinesterase 26. Thr-735 contacts substrate. Asn-737 carries an N-linked (GlcNAc...) asparagine glycan. Residue Gln-765 coordinates substrate. Catalysis depends on Asp-788, which acts as the Proton donor; for pectinesterase activity. Cysteines 802 and 822 form a disulfide. Asp-809 functions as the Nucleophile; for pectinesterase activity in the catalytic mechanism. Asn-863 carries an N-linked (GlcNAc...) asparagine glycan. The substrate site is built by Arg-872 and Trp-874. The N-linked (GlcNAc...) asparagine glycan is linked to Asn-900.

The protein in the N-terminal section; belongs to the PMEI family. In the C-terminal section; belongs to the pectinesterase family. As to expression, expressed in flowers.

Its subcellular location is the membrane. It catalyses the reaction [(1-&gt;4)-alpha-D-galacturonosyl methyl ester](n) + n H2O = [(1-&gt;4)-alpha-D-galacturonosyl](n) + n methanol + n H(+). Its pathway is glycan metabolism; pectin degradation; 2-dehydro-3-deoxy-D-gluconate from pectin: step 1/5. Its function is as follows. Acts in the modification of cell walls via demethylesterification of cell wall pectin. This Arabidopsis thaliana (Mouse-ear cress) protein is Putative pectinesterase/pectinesterase inhibitor 26 (PME26).